Consider the following 1179-residue polypeptide: ATP-dependent helicase/deoxyribonuclease subunit B (1179 aa).

The protein belongs to the helicase family. AddB/RexB type 2 subfamily. In terms of assembly, heterodimer of AddA and RexB. Requires Mg(2+) as cofactor.

The heterodimer acts as both an ATP-dependent DNA helicase and an ATP-dependent, dual-direction single-stranded exonuclease. Recognizes the chi site generating a DNA molecule suitable for the initiation of homologous recombination. This subunit has 5' -&gt; 3' nuclease activity but not helicase activity. The chain is ATP-dependent helicase/deoxyribonuclease subunit B from Lactobacillus delbrueckii subsp. bulgaricus (strain ATCC 11842 / DSM 20081 / BCRC 10696 / JCM 1002 / NBRC 13953 / NCIMB 11778 / NCTC 12712 / WDCM 00102 / Lb 14).